We begin with the raw amino-acid sequence, 357 residues long: tRNA N6-adenosine threonylcarbamoyltransferase (357 aa).

Residues H115 and H119 each coordinate Fe cation. Residues 137–141 (LASGG), D170, G183, and N281 each bind substrate. Residue D309 coordinates Fe cation.

This sequence belongs to the KAE1 / TsaD family. Fe(2+) serves as cofactor.

The protein resides in the cytoplasm. It carries out the reaction L-threonylcarbamoyladenylate + adenosine(37) in tRNA = N(6)-L-threonylcarbamoyladenosine(37) in tRNA + AMP + H(+). In terms of biological role, required for the formation of a threonylcarbamoyl group on adenosine at position 37 (t(6)A37) in tRNAs that read codons beginning with adenine. Is involved in the transfer of the threonylcarbamoyl moiety of threonylcarbamoyl-AMP (TC-AMP) to the N6 group of A37, together with TsaE and TsaB. TsaD likely plays a direct catalytic role in this reaction. This Afipia carboxidovorans (strain ATCC 49405 / DSM 1227 / KCTC 32145 / OM5) (Oligotropha carboxidovorans) protein is tRNA N6-adenosine threonylcarbamoyltransferase.